A 309-amino-acid polypeptide reads, in one-letter code: Ribosomal RNA small subunit methyltransferase H (309 aa).

S-adenosyl-L-methionine-binding positions include 36–38 (AGH), Asp55, Phe81, Asp102, and Gln109.

The protein belongs to the methyltransferase superfamily. RsmH family.

The protein localises to the cytoplasm. It carries out the reaction cytidine(1402) in 16S rRNA + S-adenosyl-L-methionine = N(4)-methylcytidine(1402) in 16S rRNA + S-adenosyl-L-homocysteine + H(+). Its function is as follows. Specifically methylates the N4 position of cytidine in position 1402 (C1402) of 16S rRNA. The polypeptide is Ribosomal RNA small subunit methyltransferase H (Mycoplasma genitalium (strain ATCC 33530 / DSM 19775 / NCTC 10195 / G37) (Mycoplasmoides genitalium)).